The following is an 886-amino-acid chain: Methanogenesis regulatory histidine kinase FilI (886 aa).

2 helical membrane passes run 7-27 and 270-290; these read ILAF…TFMC and VVGI…FLEL. An HAMP domain is found at 290-344; that stretch reads LSILMPLATITSSVEAIREQEKGQGSRIPTVGPAELATLAESINEMLDHLESYNQ. Residues 349 to 419 form the PAS domain; that stretch reads SEKRFRTIVD…EKDAGVLSGE (71 aa). One can recognise a PAC domain in the interval 421-473; the sequence is FVGEVSAHTRAGSSMTFHAVKVPLRDDRGQVTGICGIARDITDIKEAGVELLK. Positions 674–886 constitute a Histidine kinase domain; the sequence is TVSHDLRSPL…TCVLFTLPTP (213 aa). His677 is subject to Phosphohistidine; by autocatalysis.

Autophosphorylated.

The protein localises to the cell membrane. The catalysed reaction is ATP + protein L-histidine = ADP + protein N-phospho-L-histidine.. In terms of biological role, member of the two-component regulatory system FilI/FilRs, which is involved in the regulation of methanogenesis. Autophosphorylates and specifically transfers the phosphoryl group to both FilR1 and FilR2. Could also catalyze the synthesis of the quorum sensing (QS) signal molecules carboxyl-acyl homoserine lactones (AHLs), which regulate the transition of the cellular morphology from short cells to filaments and of the carbon metabolic flux from biomass formation to methane production. The polypeptide is Methanogenesis regulatory histidine kinase FilI (Methanothrix harundinacea (strain 6Ac) (Methanosaeta harundinacea)).